The following is a 262-amino-acid chain: MTTISHLRKWKQQQRKFTSITAYDAAFARLFAEQGIKVMLVGDSLGMTMQGHDSTLPVTLEDMVYHTRCVRRGAPSCLLLADLPFMSYATPAQTFENAAALMRAGANMVKLEGGAWLADTVNGLTARAVPVCGHLGLTPQSVNIFGGYKIQGRDAVGADQLLADARTLEQAGAQLLVLECVPVALAERVTHELSIPVIGIGAGAVTDGQILVMQDALGITGDSAPSFAKDFLAAGGDIAAAVRRYVQEVETGQFPAAEHSFQ.

Residues aspartate 43 and aspartate 82 each contribute to the Mg(2+) site. Residues 43 to 44 (DS), aspartate 82, and lysine 110 each bind 3-methyl-2-oxobutanoate. A Mg(2+)-binding site is contributed by glutamate 112. The active-site Proton acceptor is the glutamate 179.

The protein belongs to the PanB family. As to quaternary structure, homodecamer; pentamer of dimers. Mg(2+) is required as a cofactor.

It is found in the cytoplasm. It carries out the reaction 3-methyl-2-oxobutanoate + (6R)-5,10-methylene-5,6,7,8-tetrahydrofolate + H2O = 2-dehydropantoate + (6S)-5,6,7,8-tetrahydrofolate. It functions in the pathway cofactor biosynthesis; (R)-pantothenate biosynthesis; (R)-pantoate from 3-methyl-2-oxobutanoate: step 1/2. Functionally, catalyzes the reversible reaction in which hydroxymethyl group from 5,10-methylenetetrahydrofolate is transferred onto alpha-ketoisovalerate to form ketopantoate. In Sodalis glossinidius (strain morsitans), this protein is 3-methyl-2-oxobutanoate hydroxymethyltransferase.